We begin with the raw amino-acid sequence, 359 residues long: 4-hydroxy-3-methylbut-2-en-1-yl diphosphate synthase (flavodoxin) (359 aa).

The [4Fe-4S] cluster site is built by Cys-264, Cys-267, Cys-299, and Glu-306.

It belongs to the IspG family. The cofactor is [4Fe-4S] cluster.

It carries out the reaction (2E)-4-hydroxy-3-methylbut-2-enyl diphosphate + oxidized [flavodoxin] + H2O + 2 H(+) = 2-C-methyl-D-erythritol 2,4-cyclic diphosphate + reduced [flavodoxin]. Its pathway is isoprenoid biosynthesis; isopentenyl diphosphate biosynthesis via DXP pathway; isopentenyl diphosphate from 1-deoxy-D-xylulose 5-phosphate: step 5/6. Functionally, converts 2C-methyl-D-erythritol 2,4-cyclodiphosphate (ME-2,4cPP) into 1-hydroxy-2-methyl-2-(E)-butenyl 4-diphosphate. This is 4-hydroxy-3-methylbut-2-en-1-yl diphosphate synthase (flavodoxin) from Helicobacter pylori (strain P12).